The sequence spans 300 residues: tRNA dimethylallyltransferase (300 aa).

18 to 25 provides a ligand contact to ATP; sequence GPTATGKS. 20–25 is a substrate binding site; the sequence is TATGKS. An interaction with substrate tRNA region spans residues 43–46; that stretch reads DSRQ.

This sequence belongs to the IPP transferase family. In terms of assembly, monomer. Mg(2+) is required as a cofactor.

It carries out the reaction adenosine(37) in tRNA + dimethylallyl diphosphate = N(6)-dimethylallyladenosine(37) in tRNA + diphosphate. Its function is as follows. Catalyzes the transfer of a dimethylallyl group onto the adenine at position 37 in tRNAs that read codons beginning with uridine, leading to the formation of N6-(dimethylallyl)adenosine (i(6)A). In Cyanothece sp. (strain PCC 7425 / ATCC 29141), this protein is tRNA dimethylallyltransferase.